The chain runs to 119 residues: Integration host factor subunit beta (119 aa).

Positions 91 to 119 are disordered; the sequence is DLVGNDQGDDSSNGSSDPLQSVMDMHAMH. A compositionally biased stretch (low complexity) spans 94–107; that stretch reads GNDQGDDSSNGSSD.

Belongs to the bacterial histone-like protein family. As to quaternary structure, heterodimer of an alpha and a beta chain.

Its function is as follows. This protein is one of the two subunits of integration host factor, a specific DNA-binding protein that functions in genetic recombination as well as in transcriptional and translational control. In Bordetella parapertussis (strain 12822 / ATCC BAA-587 / NCTC 13253), this protein is Integration host factor subunit beta.